A 579-amino-acid chain; its full sequence is 3-hydroxy-3-methylglutaryl-coenzyme A reductase (579 aa).

Residues 1-22 (MEVRGGVGQGSAARHPPAPEPS) form a disordered region. Transmembrane regions (helical) follow at residues 36–56 (LPIR…LAYL) and 80–100 (AIFG…IAFV). The segment at 101-153 (QSIVSSGDDDEDFLVGSGSSGSAAAPSRQHAQAPAPCELLGSPAAAPEKMPED) is linker. The segment at 154 to 579 (DEEIVASVVA…EKTRQREVDV (426 aa)) is catalytic. The Charge relay system role is filled by Glu-247. Asn-311 is a glycosylation site (N-linked (GlcNAc...) asparagine). Active-site charge relay system residues include Lys-379 and Asp-455. A helical membrane pass occupies residues 524–544 (LLATVVAGGVLAGELSLLSAL). Catalysis depends on His-553, which acts as the Proton donor. The tract at residues 555–579 (KYNRSSKDVSSTTATEKTRQREVDV) is disordered. Asn-557 carries an N-linked (GlcNAc...) asparagine glycan. Residues 570–579 (EKTRQREVDV) show a composition bias toward basic and acidic residues.

This sequence belongs to the HMG-CoA reductase family.

It is found in the endoplasmic reticulum membrane. It carries out the reaction (R)-mevalonate + 2 NADP(+) + CoA = (3S)-3-hydroxy-3-methylglutaryl-CoA + 2 NADPH + 2 H(+). It functions in the pathway metabolic intermediate biosynthesis; (R)-mevalonate biosynthesis; (R)-mevalonate from acetyl-CoA: step 3/3. In terms of biological role, catalyzes the synthesis of mevalonate. The specific precursor of all isoprenoid compounds present in plants. The polypeptide is 3-hydroxy-3-methylglutaryl-coenzyme A reductase (HMGR) (Zea mays (Maize)).